Here is a 212-residue protein sequence, read N- to C-terminus: Probable transaldolase (212 aa).

Catalysis depends on Lys-84, which acts as the Schiff-base intermediate with substrate.

The protein belongs to the transaldolase family. Type 3B subfamily.

The protein resides in the cytoplasm. It carries out the reaction D-sedoheptulose 7-phosphate + D-glyceraldehyde 3-phosphate = D-erythrose 4-phosphate + beta-D-fructose 6-phosphate. It participates in carbohydrate degradation; pentose phosphate pathway; D-glyceraldehyde 3-phosphate and beta-D-fructose 6-phosphate from D-ribose 5-phosphate and D-xylulose 5-phosphate (non-oxidative stage): step 2/3. Transaldolase is important for the balance of metabolites in the pentose-phosphate pathway. The sequence is that of Probable transaldolase from Bacillus velezensis (strain DSM 23117 / BGSC 10A6 / LMG 26770 / FZB42) (Bacillus amyloliquefaciens subsp. plantarum).